The chain runs to 833 residues: Urease (833 aa).

One can recognise a Urease domain in the interval 395–833; sequence GALDVHVHYI…LPLTKRYFVY (439 aa). 2 residues coordinate Ni(2+): His400 and His402. His402 and Ala433 together coordinate urea. A Ni(2+)-binding site is contributed by Lys483. N6-carboxylysine is present on Lys483. Urea-binding residues include His485 and His512. His512 and His538 together coordinate Ni(2+). The active-site Proton donor is the His586. Asp626 contributes to the Ni(2+) binding site. Ala629 is a urea binding site.

This sequence in the C-terminal section; belongs to the metallo-dependent hydrolases superfamily. Urease alpha subunit family. In terms of assembly, homohexamer. The cofactor is Ni(2+). In terms of processing, carboxylation allows a single lysine to coordinate two nickel ions.

The enzyme catalyses urea + 2 H2O + H(+) = hydrogencarbonate + 2 NH4(+). It functions in the pathway nitrogen metabolism; urea degradation; CO(2) and NH(3) from urea (urease route): step 1/1. The urease accessory proteins URE4, URE6 and URE7 are required for urease activity, URE7 supplying nickel for the functional urease. Functionally, plays a nutritional role via nitrogen acquisition in the environment. Contributes to the central nervous system invasion by enhancing yeast sequestration within microcapillary beds (such as within the brain) during hematogenous spread, thereby facilitating blood-to-brain invasion by C.neoformans. Affects fitness within the mammalian phagosome, promoting non-lytic exocytosis while delaying intracellular replication and thus reducing phagolysosomal membrane damage, events that could facilitate cryptococcal dissemination when transported inside macrophages. Urease activity is also associated with the regulation of key intracellular metabolic pathways, including melanin biosynthesis, polyamine biosynthesis, as well as intracellular levels of proline and reactive oxygen species. The chain is Urease from Cryptococcus neoformans var. neoformans serotype D (strain B-3501A) (Filobasidiella neoformans).